Consider the following 876-residue polypeptide: Alanine--tRNA ligase (876 aa).

Residues histidine 564, histidine 568, cysteine 666, and histidine 670 each coordinate Zn(2+).

It belongs to the class-II aminoacyl-tRNA synthetase family. Zn(2+) serves as cofactor.

Its subcellular location is the cytoplasm. It carries out the reaction tRNA(Ala) + L-alanine + ATP = L-alanyl-tRNA(Ala) + AMP + diphosphate. In terms of biological role, catalyzes the attachment of alanine to tRNA(Ala) in a two-step reaction: alanine is first activated by ATP to form Ala-AMP and then transferred to the acceptor end of tRNA(Ala). Also edits incorrectly charged Ser-tRNA(Ala) and Gly-tRNA(Ala) via its editing domain. The sequence is that of Alanine--tRNA ligase from Colwellia psychrerythraea (strain 34H / ATCC BAA-681) (Vibrio psychroerythus).